We begin with the raw amino-acid sequence, 225 residues long: Small ribosomal subunit protein uS3 (225 aa).

Residues 38 to 106 (IRKFVQNRFN…PVNLNIIEVK (69 aa)) enclose the KH type-2 domain.

Belongs to the universal ribosomal protein uS3 family. As to quaternary structure, part of the 30S ribosomal subunit. Forms a tight complex with proteins S10 and S14.

In terms of biological role, binds the lower part of the 30S subunit head. Binds mRNA in the 70S ribosome, positioning it for translation. This chain is Small ribosomal subunit protein uS3, found in Leptospira interrogans serogroup Icterohaemorrhagiae serovar copenhageni (strain Fiocruz L1-130).